The sequence spans 198 residues: UPF0215 protein NEQ431 (198 aa).

The disordered stretch occupies residues 179 to 198; that stretch reads TKGDSSKPRAGGDSNPGPAG.

This sequence belongs to the UPF0215 family.

This is UPF0215 protein NEQ431 from Nanoarchaeum equitans (strain Kin4-M).